A 355-amino-acid polypeptide reads, in one-letter code: Undecaprenyl-phosphate alpha-N-acetylglucosaminyl 1-phosphate transferase (355 aa).

8 helical membrane passes run 1-21 (MLSI…MRPL), 39-59 (GTIP…YYLM), 63-83 (QLRL…IGIL), 123-143 (FQLT…IAII), 182-202 (WSFA…GIPF), 208-228 (VFMG…ILLL), 237-257 (MNPV…VAII), and 315-335 (WAMF…ITHA).

This sequence belongs to the glycosyltransferase 4 family. WecA subfamily. Mg(2+) serves as cofactor. Requires Mn(2+) as cofactor.

The protein resides in the cell inner membrane. The enzyme catalyses di-trans,octa-cis-undecaprenyl phosphate + UDP-N-acetyl-alpha-D-glucosamine = N-acetyl-alpha-D-glucosaminyl-di-trans,octa-cis-undecaprenyl diphosphate + UMP. It participates in bacterial outer membrane biogenesis; LPS O-antigen biosynthesis. In terms of biological role, catalyzes the transfer of the GlcNAc-1-phosphate moiety from UDP-GlcNAc onto the carrier lipid undecaprenyl phosphate (C55-P), yielding GlcNAc-pyrophosphoryl-undecaprenyl (GlcNAc-PP-C55). The polypeptide is Undecaprenyl-phosphate alpha-N-acetylglucosaminyl 1-phosphate transferase (Haemophilus influenzae (strain ATCC 51907 / DSM 11121 / KW20 / Rd)).